Consider the following 118-residue polypeptide: Large ribosomal subunit protein uL22c (118 aa).

This sequence belongs to the universal ribosomal protein uL22 family. In terms of assembly, part of the 50S ribosomal subunit.

It localises to the plastid. Its subcellular location is the organellar chromatophore. This protein binds specifically to 23S rRNA. Functionally, the globular domain of the protein is located near the polypeptide exit tunnel on the outside of the subunit, while an extended beta-hairpin is found that lines the wall of the exit tunnel in the center of the 70S ribosome. This chain is Large ribosomal subunit protein uL22c (rpl22), found in Paulinella chromatophora.